Here is a 283-residue protein sequence, read N- to C-terminus: MSKFLSQAALNTLRNTRLGSRQLVRSFAGIASTRNHSEPARQEEVYGQARGRSLLQMRMPVAGRRSMFIQTQDTPNPDSLKFLPGVDVLGKGNTYDFPNGTTAHSSPLAKLLFRVEGVKGVFFGADFVTISKQEGAEWSLIKPEVFAVIMDFFASGLPVLHDAQPNADTEILEDDDETVMMIKELLDTRIRPTVQEDGGDIVFMGYEAGVVKLKMQGSCSSCPSSIVTLKNGVQNMLQFYIPEVESVEQVFDEADRMVDSEFERFEKNLKTLKQQEPSGGGPQ.

The transit peptide at 1–30 (MSKFLSQAALNTLRNTRLGSRQLVRSFAGI) directs the protein to the mitochondrion. Positions 182 to 250 (IKELLDTRIR…IPEVESVEQV (69 aa)) are nifU. Residues Cys-219 and Cys-222 each contribute to the [4Fe-4S] cluster site.

Belongs to the NifU family.

It localises to the mitochondrion. Its function is as follows. Molecular scaffold for [Fe-S] cluster assembly of mitochondrial iron-sulfur proteins. The protein is NFU1 iron-sulfur cluster scaffold homolog, mitochondrial of Drosophila yakuba (Fruit fly).